A 56-amino-acid polypeptide reads, in one-letter code: Small ribosomal subunit protein uS14B (56 aa).

Zn(2+) is bound by residues cysteine 21 and cysteine 24. Phosphoserine is present on serine 25. Residues cysteine 39 and cysteine 42 each contribute to the Zn(2+) site.

It belongs to the universal ribosomal protein uS14 family. Component of the small ribosomal subunit (SSU). Mature yeast ribosomes consist of a small (40S) and a large (60S) subunit. The 40S small subunit contains 1 molecule of ribosomal RNA (18S rRNA) and 33 different proteins (encoded by 57 genes). The large 60S subunit contains 3 rRNA molecules (25S, 5.8S and 5S rRNA) and 46 different proteins (encoded by 81 genes). The cofactor is Zn(2+).

The protein localises to the cytoplasm. In terms of biological role, component of the ribosome, a large ribonucleoprotein complex responsible for the synthesis of proteins in the cell. The small ribosomal subunit (SSU) binds messenger RNAs (mRNAs) and translates the encoded message by selecting cognate aminoacyl-transfer RNA (tRNA) molecules. The large subunit (LSU) contains the ribosomal catalytic site termed the peptidyl transferase center (PTC), which catalyzes the formation of peptide bonds, thereby polymerizing the amino acids delivered by tRNAs into a polypeptide chain. The nascent polypeptides leave the ribosome through a tunnel in the LSU and interact with protein factors that function in enzymatic processing, targeting, and the membrane insertion of nascent chains at the exit of the ribosomal tunnel. The sequence is that of Small ribosomal subunit protein uS14B from Saccharomyces cerevisiae (strain ATCC 204508 / S288c) (Baker's yeast).